The sequence spans 427 residues: Histidinol dehydrogenase (427 aa).

The substrate site is built by Ser232, Gln254, and His257. Zn(2+)-binding residues include Gln254 and His257. Residues Glu322 and His323 each act as proton acceptor in the active site. Substrate contacts are provided by His323, Asp356, Glu410, and His415. Asp356 is a binding site for Zn(2+). Zn(2+) is bound at residue His415.

Belongs to the histidinol dehydrogenase family. The cofactor is Zn(2+).

The catalysed reaction is L-histidinol + 2 NAD(+) + H2O = L-histidine + 2 NADH + 3 H(+). It participates in amino-acid biosynthesis; L-histidine biosynthesis; L-histidine from 5-phospho-alpha-D-ribose 1-diphosphate: step 9/9. Its function is as follows. Catalyzes the sequential NAD-dependent oxidations of L-histidinol to L-histidinaldehyde and then to L-histidine. In Listeria monocytogenes serotype 4b (strain F2365), this protein is Histidinol dehydrogenase.